The primary structure comprises 289 residues: Acetyl-coenzyme A carboxylase carboxyl transferase subunit beta (289 aa).

A CoA carboxyltransferase N-terminal domain is found at 28–289 (VMTKCPKCKK…QGGEMAVWQS (262 aa)). 4 residues coordinate Zn(2+): C32, C35, C51, and C54. The segment at 32–54 (CPKCKKIMYTKEVLKNLKVCVNC) adopts a C4-type zinc-finger fold.

It belongs to the AccD/PCCB family. In terms of assembly, acetyl-CoA carboxylase is a heterohexamer composed of biotin carboxyl carrier protein (AccB), biotin carboxylase (AccC) and two subunits each of ACCase subunit alpha (AccA) and ACCase subunit beta (AccD). It depends on Zn(2+) as a cofactor.

The protein localises to the cytoplasm. It catalyses the reaction N(6)-carboxybiotinyl-L-lysyl-[protein] + acetyl-CoA = N(6)-biotinyl-L-lysyl-[protein] + malonyl-CoA. It functions in the pathway lipid metabolism; malonyl-CoA biosynthesis; malonyl-CoA from acetyl-CoA: step 1/1. Component of the acetyl coenzyme A carboxylase (ACC) complex. Biotin carboxylase (BC) catalyzes the carboxylation of biotin on its carrier protein (BCCP) and then the CO(2) group is transferred by the transcarboxylase to acetyl-CoA to form malonyl-CoA. The sequence is that of Acetyl-coenzyme A carboxylase carboxyl transferase subunit beta from Bacillus thuringiensis (strain Al Hakam).